The chain runs to 614 residues: MSIIFFIILFPLIGFLFLSTIQDFIFKRYTLNIGIFSIFISFFITCFYGVSILKNNNQVFTQILWKWLSINEFKIDFGFFLDGLSLSMLFVITGVGLLIHIFSSWYMRYKEGQSRFFAYTNLFIASMSVLVLADNFLFMYLGWEGVSVCSYLLIGFYYTELKNNLCAFKAFILTRVSDVFLMIGMFLIYREFNSFNFQEIKFLSSFLNVENFYYLDYITLFLLLGVIGKSAQLPLQTWLSDAMVGPTPVSALIHAATMVTAGVYLIARTHFLFLLTPGILYLVGLIGTLTILVSSISALVQKDIKRILAYSTMSQIGYMFLALGVKAWSAAITHLIMHAIFKALLFLSAGSLIKSCKNEKNIFKMGGLRKQLPFLYISFIVGGASLVSFPLITAGFYSKGNILFSVLKSGCIDFFIIGLFCSFLTAIYTFRMIFVIFHGKNIHTADSSTNLQHNIPLFVLLLLSTVFGSYISPPLSDVFPLSYTPIDHKFAFEIICSILSLSGIYLSYYIWIKNLYVLDKIFQFKFMRYLYYFFLKGWGFNWFYKISFVYFYLYISKRLSADPLNKIINYFLKVTQIFNFYLLKTSNGYVRWYVASMILGINFIFLLMLFFYFN.

15 helical membrane passes run 1-21 (MSII…LSTI), 33-53 (IGIF…VSIL), 79-99 (FFLD…GLLI), 136-156 (FLFM…LIGF), 168-188 (FKAF…MFLI), 207-227 (LNVE…LGVI), 247-267 (TPVS…YLIA), 271-291 (FLFL…TLTI), 327-347 (AWSA…LLFL), 372-392 (LPFL…FPLI), 410-430 (GCID…IYTF), 455-475 (IPLF…SPPL), 492-512 (FEII…YIWI), 533-553 (FFLK…YFYL), and 593-613 (YVAS…FFYF).

Belongs to the complex I subunit 5 family. As to quaternary structure, composed of 13 different subunits. Subunits NuoA, H, J, K, L, M, N constitute the membrane sector of the complex.

It localises to the cell membrane. It catalyses the reaction a quinone + NADH + 5 H(+)(in) = a quinol + NAD(+) + 4 H(+)(out). Its function is as follows. NDH-1 shuttles electrons from NADH, via FMN and iron-sulfur (Fe-S) centers, to quinones in the respiratory chain. Couples the redox reaction to proton translocation (for every two electrons transferred, four hydrogen ions are translocated across the cytoplasmic membrane), and thus conserves the redox energy in a proton gradient. This is NADH-quinone oxidoreductase subunit L (nuoL) from Buchnera aphidicola subsp. Acyrthosiphon pisum (strain APS) (Acyrthosiphon pisum symbiotic bacterium).